Reading from the N-terminus, the 380-residue chain is Putative T-box protein 40 (380 aa).

The segment at residues Met11–Asp192 is a DNA-binding region (T-box). Residues Glu188–Thr215 are disordered. Over residues Asn189–Thr215 the composition is skewed to basic and acidic residues.

It localises to the nucleus. This Caenorhabditis elegans protein is Putative T-box protein 40 (tbx-40).